A 137-amino-acid chain; its full sequence is Histone H2B (137 aa).

The segment covering 1 to 10 (MAPKAADKKP) has biased composition (basic and acidic residues). The disordered stretch occupies residues 1–45 (MAPKAADKKPASKAPATASKAPEKKDAGKKTAPSGDKKKRTKARK). Residues lysine 8 and lysine 9 each carry the N6-acetyllysine; alternate modification. Residues lysine 8 and lysine 9 each participate in a glycyl lysine isopeptide (Lys-Gly) (interchain with G-Cter in SUMO); alternate cross-link. A Phosphoserine modification is found at serine 12. Position 13 is an N6-acetyllysine (lysine 13). Lysine 24 carries the N6-acetyllysine; alternate modification. Lysine 24 is covalently cross-linked (Glycyl lysine isopeptide (Lys-Gly) (interchain with G-Cter in SUMO); alternate). Lysine 25 participates in a covalent cross-link: Glycyl lysine isopeptide (Lys-Gly) (interchain with G-Cter in SUMO). Lysine 131 participates in a covalent cross-link: Glycyl lysine isopeptide (Lys-Gly) (interchain with G-Cter in ubiquitin).

Belongs to the histone H2B family. As to quaternary structure, the nucleosome is a histone octamer containing two molecules each of H2A, H2B, H3 and H4 assembled in one H3-H4 heterotetramer and two H2A-H2B heterodimers. The octamer wraps approximately 147 bp of DNA. In terms of processing, monoubiquitinated by the UBC2-BRE1 complex to form H2BK123ub1. H2BK123ub1 gives a specific tag for epigenetic transcriptional activation and is also prerequisite for H3K4me and H3K79me formation. H2BK123ub1 also modulates the formation of double-strand breaks during meiosis and is a prerequisite for DNA-damage checkpoint activation. Phosphorylated to form H2BS10ph during progression through meiotic prophase. May be correlated with chromosome condensation. Post-translationally, acetylated by GCN5 to form H2BK11ac and H2BK16ac. H2BK16ac can also be formed by ESA1. Acetylation of N-terminal lysines and particularly formation of H2BK11acK16ac has a positive effect on transcription. In terms of processing, sumoylation to form H2BK6su or H2BK7su, and probably also H2BK16su or H2BK17su, occurs preferentially near the telomeres and represses gene transcription.

The protein resides in the nucleus. It localises to the chromosome. In terms of biological role, core component of nucleosome. Nucleosomes wrap and compact DNA into chromatin, limiting DNA accessibility to the cellular machineries which require DNA as a template. Histones thereby play a central role in transcription regulation, DNA repair, DNA replication and chromosomal stability. DNA accessibility is regulated via a complex set of post-translational modifications of histones, also called histone code, and nucleosome remodeling. The sequence is that of Histone H2B (HTB1) from Chaetomium globosum (strain ATCC 6205 / CBS 148.51 / DSM 1962 / NBRC 6347 / NRRL 1970) (Soil fungus).